The chain runs to 460 residues: MTTQFKPELLSPAGSLKNMRYAFAYGADAVYAGQPRYSLRVRNNEFNHANLKIGIDEAHSLGKKFYVVVNIAPHNSKLKTFIKDLQPVIDMKPDALIMSDPGLIMLVRENFPNIDIHLSVQANAVNWATVKFWKQMGLTRVILSRELSIDEIAEIRQQVPDIELEIFVHGALCMAYSGRCLLSGYINKRDPNQGTCTNACRWEYKMEEGTTDDVGNIVPKIDPAQQIEVKNVAPTLGEGAVTDKVFLYTESQKPDEQMTAFEDKHGTYFMNSKDLRAVQHVEKLTALGVHSLKIEGRTKSFYYCARTAQVYRKAIDDAAAGKPFDESLMDTLESLAHRGYTEGFLRRHTHDEYQNYEYGYSISDRQQFVGEFTGKRNEQGMAEVAVKNKFLLGDNVEMMTPQGNINFKIEKMLNRKNETVDAALGDGHFVFLNVPQDINLNYALLMRNLVNTNTRNPHSN.

Belongs to the peptidase U32 family.

Functionally, involved in prephenate-dependent formation of 5-hydroxyuridine (ho5U) modification at position 34 in tRNAs, the first step in 5-carboxymethoxyuridine (cmo5U) biosynthesis. The protein is tRNA hydroxylation protein P of Haemophilus influenzae (strain ATCC 51907 / DSM 11121 / KW20 / Rd).